The chain runs to 271 residues: Dihydropteroate synthase type-2 (271 aa).

Residues 1–259 (MNKSLIIFGI…EPRPLRDGLA (259 aa)) form the Pterin-binding domain. Residue asparagine 12 participates in 4-aminobenzoate binding. Diphosphate contacts are provided by asparagine 12, phenylalanine 18, serine 51, and serine 52. Residue asparagine 12 participates in Mg(2+) binding. Serine 52, aspartate 85, asparagine 104, aspartate 174, phenylalanine 179, lysine 213, and serine 214 together coordinate 7,8-dihydropteroate. (7,8-dihydropterin-6-yl)methyl diphosphate contacts are provided by aspartate 85, asparagine 104, and aspartate 174. Residues asparagine 104 and aspartate 174 each coordinate 6-hydroxymethyl-7,8-dihydropterin. Residue lysine 213 participates in (7,8-dihydropterin-6-yl)methyl diphosphate binding. Residue lysine 213 participates in 6-hydroxymethyl-7,8-dihydropterin binding. Arginine 247 contacts 4-aminobenzoate. The diphosphate site is built by arginine 247 and histidine 249. 247–249 (RTH) serves as a coordination point for (7,8-dihydropterin-6-yl)methyl diphosphate.

This sequence belongs to the DHPS family. Homodimer. The cofactor is Mg(2+).

The enzyme catalyses (7,8-dihydropterin-6-yl)methyl diphosphate + 4-aminobenzoate = 7,8-dihydropteroate + diphosphate. The protein operates within cofactor biosynthesis; tetrahydrofolate biosynthesis; 7,8-dihydrofolate from 2-amino-4-hydroxy-6-hydroxymethyl-7,8-dihydropteridine diphosphate and 4-aminobenzoate: step 1/2. In terms of biological role, catalyzes the condensation of para-aminobenzoate (pABA) with 6-hydroxymethyl-7,8-dihydropterin diphosphate (DHPt-PP) to form 7,8-dihydropteroate (H2Pte), the immediate precursor of folate derivatives. Confers resistance to sulfonamide antibiotics, including sulfamethoxazole (SMX), sulfadiazine and sulfisoxazole. The type II enzyme is stable whereas type I DHPS loses its activity rapidly. The polypeptide is Dihydropteroate synthase type-2 (Escherichia coli).